Consider the following 1129-residue polypeptide: Phytochrome A (1129 aa).

Residues 217-399 (SMERLCDTMV…VFAIHVSKEL (183 aa)) form the GAF domain. C322 is a phytochromobilin binding site. 2 consecutive PAS domains span residues 622–692 (VTSE…LQGK) and 755–826 (DYKA…VNLG). The Histidine kinase domain occupies 906 to 1123 (YLRRQAKNPL…TFIITVELAA (218 aa)).

Belongs to the phytochrome family. In terms of assembly, homodimer. Contains one covalently linked phytochromobilin chromophore.

In terms of biological role, regulatory photoreceptor which exists in two forms that are reversibly interconvertible by light: the Pr form that absorbs maximally in the red region of the spectrum and the Pfr form that absorbs maximally in the far-red region. Photoconversion of Pr to Pfr induces an array of morphogenic responses, whereas reconversion of Pfr to Pr cancels the induction of those responses. Pfr controls the expression of a number of nuclear genes including those encoding the small subunit of ribulose-bisphosphate carboxylase, chlorophyll A/B binding protein, protochlorophyllide reductase, rRNA, etc. It also controls the expression of its own gene(s) in a negative feedback fashion. This Petroselinum crispum (Parsley) protein is Phytochrome A (PHYA).